We begin with the raw amino-acid sequence, 634 residues long: MRGLLLAGALALPASVFAHPAHQSYGLNRRTVDLNAFRLKSLAKYVNATETVIEAPSSFAPFKPQSYVEVATQHVKMIAPDATFRVVDDHYVGDNGVAHVHFRQTANGLDIDNADFNVNVGKDGKVFSYGNSFYTGQIPSSAALTKRDFSDPVTALKGTTNTLQLPITVDSASSESTEEKESYVFKGVSGTVSDPKAKLVYFVKDDGTLALAWRVETDIDSNWLLTYIDAKSGEEIHGVVDYVAEADYQVYAWGINDPTEGERTVIKDPWDSVASEFTWISDGSTNYTTSRGNNGIAQSNPSGGSSYLNNYRPSSSSLSFKYPYSVSSSPPSSYIDASIIQLFYTANIYHDLLYTLGFTEKAGNFEYNTNGQGGLGNDYVILNAQDGSGTNNANFATPPDGQPGRMRMYVWTESTPYRDGSFEAGIVIHEYTHGLSNRLTGGPANSNCLNALESGGMGEGWSDFMATAIRLKPGDKRSTDYTMGEWASNRAGGIRQYPYSTSLSTNPLTYTSVNSLNAVHAIGTVWASMLYEVLWNLIDKHGKNDAPKPTLRDGVPTDGKYLAMKLVMDGMALQPCNPNFVQARDAILDADTALTGGENQCEIWTAFAKRGLGAGAKYSSRNRVGSTEVPSGVC.

Positions 1–18 (MRGLLLAGALALPASVFA) are cleaved as a signal peptide. A propeptide spanning residues 19-245 (HPAHQSYGLN…IHGVVDYVAE (227 aa)) is cleaved from the precursor. An N-linked (GlcNAc...) asparagine glycan is attached at Asn-286. His-429 serves as a coordination point for Zn(2+). Glu-430 is an active-site residue. His-433 lines the Zn(2+) pocket.

This sequence belongs to the peptidase M36 family. Zn(2+) serves as cofactor.

It localises to the secreted. Functionally, secreted metalloproteinase that allows assimilation of proteinaceous substrates and probably acts as a virulence factor. This chain is Extracellular metalloproteinase mep (mep), found in Aspergillus fumigatus (strain CBS 144.89 / FGSC A1163 / CEA10) (Neosartorya fumigata).